The following is a 341-amino-acid chain: Protein pelota homolog (341 aa).

Belongs to the eukaryotic release factor 1 family. Pelota subfamily. As to quaternary structure, monomer. Requires a divalent metal cation as cofactor.

It is found in the cytoplasm. In terms of biological role, may function in recognizing stalled ribosomes, interact with stem-loop structures in stalled mRNA molecules, and effect endonucleolytic cleavage of the mRNA. May play a role in the release non-functional ribosomes and degradation of damaged mRNAs. Has endoribonuclease activity. The chain is Protein pelota homolog from Sulfurisphaera tokodaii (strain DSM 16993 / JCM 10545 / NBRC 100140 / 7) (Sulfolobus tokodaii).